The sequence spans 161 residues: SsrA-binding protein (161 aa).

The segment at 138 to 161 (DKRTDSKEKDWNRDKARIMKSSLR) is disordered. The span at 139 to 154 (KRTDSKEKDWNRDKAR) shows a compositional bias: basic and acidic residues.

This sequence belongs to the SmpB family.

The protein localises to the cytoplasm. Functionally, required for rescue of stalled ribosomes mediated by trans-translation. Binds to transfer-messenger RNA (tmRNA), required for stable association of tmRNA with ribosomes. tmRNA and SmpB together mimic tRNA shape, replacing the anticodon stem-loop with SmpB. tmRNA is encoded by the ssrA gene; the 2 termini fold to resemble tRNA(Ala) and it encodes a 'tag peptide', a short internal open reading frame. During trans-translation Ala-aminoacylated tmRNA acts like a tRNA, entering the A-site of stalled ribosomes, displacing the stalled mRNA. The ribosome then switches to translate the ORF on the tmRNA; the nascent peptide is terminated with the 'tag peptide' encoded by the tmRNA and targeted for degradation. The ribosome is freed to recommence translation, which seems to be the essential function of trans-translation. The protein is SsrA-binding protein of Aliivibrio fischeri (strain MJ11) (Vibrio fischeri).